A 56-amino-acid polypeptide reads, in one-letter code: UPF0434 protein CbuK_1382 (56 aa).

The protein belongs to the UPF0434 family.

The polypeptide is UPF0434 protein CbuK_1382 (Coxiella burnetii (strain CbuK_Q154) (Coxiella burnetii (strain Q154))).